A 465-amino-acid polypeptide reads, in one-letter code: UDP-N-acetylmuramate--L-alanine ligase (465 aa).

An ATP-binding site is contributed by 112–118; that stretch reads GTHGKTT.

Belongs to the MurCDEF family.

It is found in the cytoplasm. The catalysed reaction is UDP-N-acetyl-alpha-D-muramate + L-alanine + ATP = UDP-N-acetyl-alpha-D-muramoyl-L-alanine + ADP + phosphate + H(+). It participates in cell wall biogenesis; peptidoglycan biosynthesis. In terms of biological role, cell wall formation. This is UDP-N-acetylmuramate--L-alanine ligase from Burkholderia orbicola (strain MC0-3).